Here is a 96-residue protein sequence, read N- to C-terminus: uncharacterized protein (96 aa).

Residues 1-23 (MKQFYSVVLTIIIYISSQSNVVS) form the signal peptide. 3 disulfides stabilise this stretch: cysteine 60-cysteine 74, cysteine 67-cysteine 78, and cysteine 73-cysteine 83.

It localises to the secreted. This is an uncharacterized protein from Schistosoma japonicum (Blood fluke).